We begin with the raw amino-acid sequence, 145 residues long: MLTAEEKAAVTAFWGKVKVDEVGGEALGRLLVVYPWTQRFFESFGDLSTADAVMNNPKVKAHGKKVLDSFSNGMKHLDDLKGTFAALSELHCDKLHVDPENFKLLGNVLVVVLARHFGKEFTPELQADYQKVVTGVANALAHRYH.

The 145-residue stretch at 1 to 145 (MLTAEEKAAV…VANALAHRYH (145 aa)) folds into the Globin domain. At Thr-11 the chain carries Phosphothreonine. Ser-43 carries the post-translational modification Phosphoserine. Residue Lys-58 is modified to N6-acetyllysine. Heme b is bound at residue His-62. Lys-81 carries the N6-acetyllysine modification. His-91 contacts heme b. Residue Cys-92 is modified to S-nitrosocysteine.

The protein belongs to the globin family. Heterotetramer of two alpha chains and two beta chains. Red blood cells.

Functionally, involved in oxygen transport from the lung to the various peripheral tissues. This chain is Hemoglobin subunit beta (HBB), found in Tragelaphus strepsiceros (Greater kudu).